Here is a 124-residue protein sequence, read N- to C-terminus: MAQGSDNNDTSYTKSPSPGNKQGSSDDMRKVMRREKNRIAAQKSRMRQTQKADSLHLESESLEKENAALRKEVKRLTEEAKYLSTVLSNHEPLCTGLSGASPELLYGAHHGAFHQHISVPHYPL.

The span at 1-23 (MAQGSDNNDTSYTKSPSPGNKQG) shows a compositional bias: polar residues. The tract at residues 1-60 (MAQGSDNNDTSYTKSPSPGNKQGSSDDMRKVMRREKNRIAAQKSRMRQTQKADSLHLESE) is disordered. Positions 27-90 (DMRKVMRREK…KYLSTVLSNH (64 aa)) constitute a bZIP domain. The interval 29–51 (RKVMRREKNRIAAQKSRMRQTQK) is basic motif. A leucine-zipper region spans residues 55 to 83 (LHLESESLEKENAALRKEVKRLTEEAKYL).

It belongs to the bZIP family.

Its subcellular location is the nucleus. The protein localises to the cytoplasm. AP-1 family transcription factor that controls the differentiation of lineage-specific cells in the immune system: specifically mediates the differentiation of T-helper 17 cells (Th17), follicular T-helper cells (TfH), CD8(+) dendritic cells and class-switch recombination (CSR) in B-cells. The chain is Basic leucine zipper transcriptional factor ATF-like (batf) from Danio rerio (Zebrafish).